We begin with the raw amino-acid sequence, 342 residues long: MAELKPLIAKVANGESLNREDARTAFDILMSGEATPSQIGGFLMALRVRGETVDEIVGAVSSMRARMLPVSAPANAIDIVGTGGDGIGTYNISTLASIITAGTGLPVAKHGNRALSSKSGTADALSALGVRLDIGPDLIARCIAEAGLGFMFAQMHHSAMRHVGPSRVELGTRTIFNLLGPLSNPAGAKRQLLGVFSPRWLVPLAEVLRDLGSESIWVVHGDGMDEVTTTGVTHVAALEDGKIRTFDLTPKDFGVEPALMNDLKGGDGIANAAALREVLSGKRNAYRDISLCNAAAALVIAGKAETLSQAMTIASDALDSGKAAAALDRLVAVSNEANSGQE.

5-phospho-alpha-D-ribose 1-diphosphate-binding positions include Gly81, 84 to 85 (GD), Thr89, 91 to 94 (NIST), 109 to 117 (KHGNRALSS), and Thr121. Gly81 provides a ligand contact to anthranilate. Residue Ser93 participates in Mg(2+) binding. Position 112 (Asn112) interacts with anthranilate. Arg167 provides a ligand contact to anthranilate. Mg(2+)-binding residues include Asp225 and Glu226.

It belongs to the anthranilate phosphoribosyltransferase family. Homodimer. Mg(2+) is required as a cofactor.

It carries out the reaction N-(5-phospho-beta-D-ribosyl)anthranilate + diphosphate = 5-phospho-alpha-D-ribose 1-diphosphate + anthranilate. It participates in amino-acid biosynthesis; L-tryptophan biosynthesis; L-tryptophan from chorismate: step 2/5. Catalyzes the transfer of the phosphoribosyl group of 5-phosphorylribose-1-pyrophosphate (PRPP) to anthranilate to yield N-(5'-phosphoribosyl)-anthranilate (PRA). The chain is Anthranilate phosphoribosyltransferase from Agrobacterium fabrum (strain C58 / ATCC 33970) (Agrobacterium tumefaciens (strain C58)).